The primary structure comprises 369 residues: MFTDVVELTVSSGKGGQGCVSFRREKFVVNGGPNGGDGGKGGDIWFKCDNNTHTLSHFQKKMHIKADNGAPGESSNMSGKSGVKKVIIVPPGTQIIDMDSEEVLFDMLIDGQEELFISGGRGGLGNTHFKSSTNQRPTYAQPGEKGETRRIKLDLKLIADVGLVGFPNVGKSTLISTVSNARPEIANYEFTTLTPKLGQVNIGDFESFIMADIPGIIGGAHEGKGLGIEFLRHIERTQILLFMVDLASYRDLKEQIETLKAEVGAFSDKLGSSKYAIALTRADAVAQDEINDLVNSFMEIVGVKATSNSNLNFDKNLPYFIQDSADETLGYDREIPYFVMPISSATNKNIDPLKHALFNLVQTNRIYSK.

In terms of domain architecture, Obg spans 1-158 (MFTDVVELTV…RRIKLDLKLI (158 aa)). Residues 126–146 (NTHFKSSTNQRPTYAQPGEKG) form a disordered region. Polar residues predominate over residues 128–138 (HFKSSTNQRPT). Positions 159 to 362 (ADVGLVGFPN…LKHALFNLVQ (204 aa)) constitute an OBG-type G domain. GTP contacts are provided by residues 165 to 172 (GFPNVGKS), 190 to 194 (FTTLT), 212 to 215 (DIPG), 280 to 283 (TRAD), and 343 to 345 (SSA). Mg(2+) contacts are provided by Ser-172 and Thr-192.

The protein belongs to the TRAFAC class OBG-HflX-like GTPase superfamily. OBG GTPase family. In terms of assembly, monomer. The cofactor is Mg(2+).

Its subcellular location is the cytoplasm. Its function is as follows. An essential GTPase which binds GTP, GDP and possibly (p)ppGpp with moderate affinity, with high nucleotide exchange rates and a fairly low GTP hydrolysis rate. Plays a role in control of the cell cycle, stress response, ribosome biogenesis and in those bacteria that undergo differentiation, in morphogenesis control. This chain is GTPase Obg, found in Sulfurimonas denitrificans (strain ATCC 33889 / DSM 1251) (Thiomicrospira denitrificans (strain ATCC 33889 / DSM 1251)).